We begin with the raw amino-acid sequence, 142 residues long: ATP synthase epsilon chain (142 aa).

The protein belongs to the ATPase epsilon chain family. In terms of assembly, F-type ATPases have 2 components, CF(1) - the catalytic core - and CF(0) - the membrane proton channel. CF(1) has five subunits: alpha(3), beta(3), gamma(1), delta(1), epsilon(1). CF(0) has three main subunits: a, b and c.

The protein resides in the cell inner membrane. Its function is as follows. Produces ATP from ADP in the presence of a proton gradient across the membrane. This Coxiella burnetii (strain CbuK_Q154) (Coxiella burnetii (strain Q154)) protein is ATP synthase epsilon chain.